We begin with the raw amino-acid sequence, 282 residues long: Short-chain dehydrogenase/reductase prx7 (282 aa).

Residues Asn-23, Asn-70, Tyr-150, Lys-154, Val-183, and Thr-185 each contribute to the NADP(+) site. Tyr-150 serves as the catalytic Proton acceptor. Lys-154 serves as the catalytic Lowers pKa of active site Tyr.

The protein belongs to the short-chain dehydrogenases/reductases (SDR) family.

It participates in sesquiterpene biosynthesis. Its function is as follows. Short-chain dehydrogenase/reductase; part of the gene cluster that mediates the biosynthesis of PR-toxin, a bicyclic sesquiterpene belonging to the eremophilane class and acting as a mycotoxin. The first step of the pathway is catalyzed by the aristolochene synthase which performs the cyclization of trans,trans-farnesyl diphosphate (FPP) to the bicyclic sesquiterpene aristolochene. Following the formation of aristolochene, the non-oxygenated aristolochene is converted to the trioxygenated intermediate eremofortin B, via 7-epi-neopetasone. This conversion appears to involve three enzymes, a hydroxysterol oxidase-like enzyme, the quinone-oxidase prx3 that forms the quinone-type-structure in the bicyclic nucleus of aristolochene with the C8-oxo group and the C-3 hydroxyl group, and the P450 monooxygenase prx9 that introduces the epoxide at the double bond between carbons 1 and 2. No monoxy or dioxy-intermediates have been reported to be released to the broth, so these three early oxidative reactions may be coupled together. Eremofortin B is further oxidized by another P450 monooxygenase, that introduces a second epoxide between carbons 7 and 11 prior to acetylation to eremofortin A by the acetyltransferase prx11. The second epoxidation may be performed by a second P450 monooxygenase. After the acetylation step, eremofortin A is converted to eremofortin C and then to PR-toxin. First the conversion of eremofortin A to eremofortin C proceeds by oxidation of the side chain of the molecule at C-12 and is catalyzed by the short-chain oxidoreductase prx1. The cytochrome P450 monooxygenase prx8 also plays a role in this step. The primary alcohol formed at C-12 is finally oxidized by the short-chain alcohol dehydrogenase prx4 that forms PR-toxin. This Penicillium rubens (strain ATCC 28089 / DSM 1075 / NRRL 1951 / Wisconsin 54-1255) (Penicillium chrysogenum) protein is Short-chain dehydrogenase/reductase prx7.